A 78-amino-acid chain; its full sequence is Small ribosomal subunit protein bS16c (78 aa).

Belongs to the bacterial ribosomal protein bS16 family.

It is found in the plastid. The protein localises to the chloroplast. The polypeptide is Small ribosomal subunit protein bS16c (Gracilaria tenuistipitata var. liui (Red alga)).